We begin with the raw amino-acid sequence, 212 residues long: Transcriptional regulator GfcR (212 aa).

Residues 38–60 (LVERSGTGTEPDTSDDGGPHDIH) form a disordered region.

It belongs to the purine/pyrimidine phosphoribosyltransferase family. GfcR subfamily.

DNA-binding transcriptional regulator that functions as a regulator of central sugar catabolic pathways. This is Transcriptional regulator GfcR from Haloarcula marismortui (strain ATCC 43049 / DSM 3752 / JCM 8966 / VKM B-1809) (Halobacterium marismortui).